We begin with the raw amino-acid sequence, 298 residues long: N-acetylmuramic acid 6-phosphate etherase (298 aa).

The 164-residue stretch at 54-217 (TIKAMKQGGR…STTVMIGLGK (164 aa)) folds into the SIS domain. E82 functions as the Proton donor in the catalytic mechanism. E113 is an active-site residue.

Belongs to the GCKR-like family. MurNAc-6-P etherase subfamily. As to quaternary structure, homodimer.

It carries out the reaction N-acetyl-D-muramate 6-phosphate + H2O = N-acetyl-D-glucosamine 6-phosphate + (R)-lactate. Its pathway is amino-sugar metabolism; N-acetylmuramate degradation. Specifically catalyzes the cleavage of the D-lactyl ether substituent of MurNAc 6-phosphate, producing GlcNAc 6-phosphate and D-lactate. This is N-acetylmuramic acid 6-phosphate etherase from Halalkalibacterium halodurans (strain ATCC BAA-125 / DSM 18197 / FERM 7344 / JCM 9153 / C-125) (Bacillus halodurans).